Here is a 186-residue protein sequence, read N- to C-terminus: Protein SPMIP2 (186 aa).

The tract at residues 163-186 (SSLPRASKPPKLPKLPKKEKKRKH) is disordered. Residues 176–186 (KLPKKEKKRKH) show a composition bias toward basic residues.

The protein is Protein SPMIP2 of Homo sapiens (Human).